A 194-amino-acid chain; its full sequence is dTTP/UTP pyrophosphatase (194 aa).

Asp73 serves as the catalytic Proton acceptor.

The protein belongs to the Maf family. YhdE subfamily. A divalent metal cation serves as cofactor.

It is found in the cytoplasm. It catalyses the reaction dTTP + H2O = dTMP + diphosphate + H(+). The catalysed reaction is UTP + H2O = UMP + diphosphate + H(+). Its function is as follows. Nucleoside triphosphate pyrophosphatase that hydrolyzes dTTP and UTP. May have a dual role in cell division arrest and in preventing the incorporation of modified nucleotides into cellular nucleic acids. This is dTTP/UTP pyrophosphatase from Clostridium botulinum (strain Kyoto / Type A2).